Consider the following 290-residue polypeptide: MGNLRDIRRRIKSVKNTSQITRAMQMVASAKMRRAQDQAVKGRPYIRALAEVLYHLQDEIDTSNSPLMQTHGGADLVLLVNTDRGLCGGLNANLIKMVREQAPENAHYITIGRKLNAALAKLNERLEATWSLTDPLSLLELKPVFDFIVQKFKAEEYGRVFVAFSGFVNTMVQKPVFRQLLPIEPEPLMNMAKAGGSSLDGADAHKQFLLEPSPAALLDTILPLYVFHGLVQIVLEARASEHSARMVAMKGATENAKNIIGGLTLDYNKARQTQITNELLEITTAMRAME.

This sequence belongs to the ATPase gamma chain family. As to quaternary structure, F-type ATPases have 2 components, CF(1) - the catalytic core - and CF(0) - the membrane proton channel. CF(1) has five subunits: alpha(3), beta(3), gamma(1), delta(1), epsilon(1). CF(0) has three main subunits: a, b and c.

It localises to the cell membrane. In terms of biological role, produces ATP from ADP in the presence of a proton gradient across the membrane. The gamma chain is believed to be important in regulating ATPase activity and the flow of protons through the CF(0) complex. This chain is ATP synthase gamma chain, found in Akkermansia muciniphila (strain ATCC BAA-835 / DSM 22959 / JCM 33894 / BCRC 81048 / CCUG 64013 / CIP 107961 / Muc).